An 87-amino-acid polypeptide reads, in one-letter code: MASKDFHIVAETGIHARPATLLVQTASKFASDITLDYKGKAVNLKSIMGVMSLGVGQGADVTITAEGADADDAIAAINETMTKEGLA.

In terms of domain architecture, HPr spans 2–87; the sequence is ASKDFHIVAE…NETMTKEGLA (86 aa). Residue histidine 15 is the Pros-phosphohistidine intermediate of the active site. At serine 46 the chain carries Phosphoserine; by HPrK/P.

The protein belongs to the HPr family.

It is found in the cytoplasm. With respect to regulation, phosphorylation on Ser-46 inhibits the phosphoryl transfer from enzyme I to HPr. Its function is as follows. General (non sugar-specific) component of the phosphoenolpyruvate-dependent sugar phosphotransferase system (sugar PTS). This major carbohydrate active-transport system catalyzes the phosphorylation of incoming sugar substrates concomitantly with their translocation across the cell membrane. The phosphoryl group from phosphoenolpyruvate (PEP) is transferred to the phosphoryl carrier protein HPr by enzyme I. Phospho-HPr then transfers it to the PTS EIIA domain. P-Ser-HPr interacts with the catabolite control protein A (CcpA), forming a complex that binds to DNA at the catabolite response elements cre, operator sites preceding a large number of catabolite-regulated genes. Thus, P-Ser-HPr is a corepressor in carbon catabolite repression (CCR), a mechanism that allows bacteria to coordinate and optimize the utilization of available carbon sources. P-Ser-HPr also plays a role in inducer exclusion, in which it probably interacts with several non-PTS permeases and inhibits their transport activity. This Streptococcus mutans serotype c (strain ATCC 700610 / UA159) protein is Phosphocarrier protein HPr (ptsH).